The sequence spans 357 residues: Glycerol-1-phosphate dehydrogenase [NAD(P)+] (357 aa).

Residues 104–108 (GKTID) and 126–129 (TAAS) contribute to the NAD(+) site. Position 131 (Asp-131) interacts with substrate. An NAD(+)-binding site is contributed by Ser-135. Asp-178 lines the substrate pocket. 2 residues coordinate Zn(2+): Asp-178 and His-258. His-262 is a substrate binding site. His-274 contributes to the Zn(2+) binding site.

Belongs to the glycerol-1-phosphate dehydrogenase family. Zn(2+) serves as cofactor.

The protein resides in the cytoplasm. It catalyses the reaction sn-glycerol 1-phosphate + NAD(+) = dihydroxyacetone phosphate + NADH + H(+). The catalysed reaction is sn-glycerol 1-phosphate + NADP(+) = dihydroxyacetone phosphate + NADPH + H(+). It participates in membrane lipid metabolism; glycerophospholipid metabolism. Its function is as follows. Catalyzes the NAD(P)H-dependent reduction of dihydroxyacetonephosphate (DHAP or glycerone phosphate) to glycerol 1-phosphate (G1P). The G1P thus generated is used as the glycerophosphate backbone of phospholipids in the cellular membranes of Archaea. The chain is Glycerol-1-phosphate dehydrogenase [NAD(P)+] from Methanococcoides burtonii (strain DSM 6242 / NBRC 107633 / OCM 468 / ACE-M).